The primary structure comprises 147 residues: Hemoglobin larval subunit beta-1 (147 aa).

The Globin domain occupies 3 to 147 (HLSADEKSAI…LVAALSHGYF (145 aa)). The heme b site is built by H64 and H93.

The protein belongs to the globin family. In terms of assembly, heterotetramer of two alpha chains and two beta chains. In terms of tissue distribution, red blood cells.

Functionally, this is a larval (tadpole) beta-globin. This Xenopus laevis (African clawed frog) protein is Hemoglobin larval subunit beta-1.